The sequence spans 718 residues: MALYQRWRCLRLQGLQACRLHTAVVSTPPRWLAERLGLFEELWAAQVKRLASMAQKEPRTIKISLPGGQKIDAVAWNTTPYQLARQISSTLADTAVAAQVNGEPYDLERPLETDSDLRFLTFDSPEGKAVFWHSSTHVLGAAAEQFLGAVLCRGPSTEYGFYHDFFLGKERTIRGSELPVLERICQELTAAARPFRRLEASRDQLRQLFKDNPFKLHLIEEKVTGPTATVYGCGTLVDLCQGPHLRHTGQIGGLKLLSNSSSLWRSSGAPETLQRVSGISFPTTELLRVWEAWREEAELRDHRRIGKEQELFFFHELSPGSCFFLPRGTRVYNALVAFIRAEYAHRGFSEVKTPTLFSTKLWEQSGHWEHYQEDMFAVQPPGSDRPPSSQSDDSTRHITDTLALKPMNCPAHCLMFAHRPRSWRELPLRLADFGALHRAEASGGLGGLTRLRCFQQDDAHIFCTTDQLEAEIQSCLDFLRSVYAVLGFSFRLALSTRPSGFLGDPCLWDQAEQVLKQALKEFGEPWDLNSGDGAFYGPKIDVHLHDALGRPHQCGTIQLDFQLPLRFDLQYKGQAGALERPVLIHRAVLGSVERLLGVLAESCGGKWPLWLSPFQVVVIPVGSEQEEYAKEAQQSLRAAGLVSDLDADSGLTLSRRIRRAQLAHYNFQFVVGQKEQSKRTVNIRTRDNRRLGEWDLPEAVQRLVELQNTRVPNAEEIF.

The residue at position 52 (S52) is a Phosphoserine. The region spanning 55–121 (QKEPRTIKIS…ETDSDLRFLT (67 aa)) is the TGS domain.

This sequence belongs to the class-II aminoacyl-tRNA synthetase family. In terms of assembly, homodimer.

The protein resides in the mitochondrion matrix. It carries out the reaction tRNA(Thr) + L-threonine + ATP = L-threonyl-tRNA(Thr) + AMP + diphosphate + H(+). In terms of biological role, catalyzes the attachment of threonine to tRNA(Thr) in a two-step reaction: threonine is first activated by ATP to form Thr-AMP and then transferred to the acceptor end of tRNA(Thr). Also edits incorrectly charged tRNA(Thr) via its editing domain. The chain is Threonine--tRNA ligase, mitochondrial (TARS2) from Homo sapiens (Human).